The sequence spans 634 residues: Probable potassium transport system protein Kup (634 aa).

Transmembrane regions (helical) follow at residues 21-41 (LVIG…LYTL), 58-78 (VLGI…LKYV), 110-130 (MYVV…DGVI), 147-167 (APKL…MLFL), 179-199 (AFGP…VYNM), 223-243 (WHAV…EALY), 258-278 (WQFV…ALVL), 296-316 (ALYP…QALI), 348-368 (IYVP…VIGF), 377-397 (AYGV…IIYA), 403-423 (VPAP…CAFF), and 427-447 (IIKF…LFTL).

The protein belongs to the HAK/KUP transporter (TC 2.A.72) family.

The protein resides in the cell inner membrane. It carries out the reaction K(+)(in) + H(+)(in) = K(+)(out) + H(+)(out). Transport of potassium into the cell. Likely operates as a K(+):H(+) symporter. This Xanthomonas axonopodis pv. citri (strain 306) protein is Probable potassium transport system protein Kup.